Reading from the N-terminus, the 97-residue chain is MKLRPLHDRVVIRRSEEETKTAGGIVLPGSAAEKPNRGEVVAVGTGRVLDNGEVRPLAVKVGDKVVFGPYSGSNTIKVDGEDLLVMGENEIFAVVEA.

The protein belongs to the GroES chaperonin family. As to quaternary structure, heptamer of 7 subunits arranged in a ring. Interacts with the chaperonin GroEL.

It is found in the cytoplasm. Its function is as follows. Together with the chaperonin GroEL, plays an essential role in assisting protein folding. The GroEL-GroES system forms a nano-cage that allows encapsulation of the non-native substrate proteins and provides a physical environment optimized to promote and accelerate protein folding. GroES binds to the apical surface of the GroEL ring, thereby capping the opening of the GroEL channel. The protein is Co-chaperonin GroES of Azotobacter vinelandii (strain DJ / ATCC BAA-1303).